A 331-amino-acid polypeptide reads, in one-letter code: Syntaxin-43 (331 aa).

At 1–305 (MATRNRTLLF…KAERTQRQGG (305 aa)) the chain is on the cytoplasmic side. Disordered regions lie at residues 20-45 (VRAP…KSGL) and 59-80 (PNRS…GTIT). The segment covering 31–40 (TLTEHNSLTG) has biased composition (polar residues). A coiled-coil region spans residues 124-154 (KEDQHQIETLTQEVTFLLKKSEKQLQRLSAA). One can recognise a t-SNARE coiled-coil homology domain in the interval 235–297 (EEISIEREKE…DDGLKQLQKA (63 aa)). Residues 306–326 (MVMCASVLVILCFIMLVLLIL) traverse the membrane as a helical; Anchor for type IV membrane protein segment. Residues 327–331 (KEILL) are Vesicular-facing.

It belongs to the syntaxin family. In terms of assembly, part of the t-SNARE complex. In terms of tissue distribution, expressed at low levels in roots, stems, flowers and leaves.

The protein resides in the golgi apparatus. The protein localises to the trans-Golgi network membrane. Contributes to the regulation of secretory and vacuolar transport pathways in the post-Golgi network, and to the maintenance of the Golgi apparatus and trans-Golgi network (TGN) morphologies. Vesicle trafficking protein that functions in the secretory pathway and mediates liposome fusion. Required for extracellular resistance responses to a fungal pathogen. Also involved in the protection of chloroplasts from salicylic acid-dependent biotic stress. This is Syntaxin-43 from Arabidopsis thaliana (Mouse-ear cress).